We begin with the raw amino-acid sequence, 177 residues long: MTKEYATLAGGCFWCMVKPFTSYPGIKSVVSGYSGGHADNPTYEQVCTNQTGHVEAVQITFDPEVTSFENILDIYFKTFDPTDDQGQFFDRGESYQPVIFYHDKHQKKAAEFKKQQLNEQGIFKKPVITPIKPYKNFYPAEDYHQDYYKKNPVHYYQYQRGSGRKAFIESHWGNQNA.

Residue cysteine 12 is part of the active site.

The protein belongs to the MsrA Met sulfoxide reductase family.

It catalyses the reaction L-methionyl-[protein] + [thioredoxin]-disulfide + H2O = L-methionyl-(S)-S-oxide-[protein] + [thioredoxin]-dithiol. It carries out the reaction [thioredoxin]-disulfide + L-methionine + H2O = L-methionine (S)-S-oxide + [thioredoxin]-dithiol. Functionally, has an important function as a repair enzyme for proteins that have been inactivated by oxidation. Catalyzes the reversible oxidation-reduction of methionine sulfoxide in proteins to methionine. This Staphylococcus aureus (strain MRSA252) protein is Peptide methionine sulfoxide reductase MsrA 2.